The sequence spans 376 residues: Heterodimeric geranylgeranyl pyrophosphate synthase large subunit 2 (376 aa).

An N-terminal signal peptide occupies residues 1 to 24 (MEPQILFLYLSLFILSLNFFFTNL). Residues Lys125, Arg128, and His157 each coordinate isopentenyl diphosphate. Positions 164 and 170 each coordinate Mg(2+). Dimethylallyl diphosphate is bound at residue Arg175. Arg176 provides a ligand contact to isopentenyl diphosphate. Dimethylallyl diphosphate-binding residues include Lys261, Thr262, Gln299, Lys316, and Lys326.

This sequence belongs to the FPP/GGPP synthase family. In terms of assembly, monomer. Part of a heterodimeric geranyl(geranyl)diphosphate synthase. Interacts with GGR. Requires Mg(2+) as cofactor. As to expression, mainly expressed in flowers.

It is found in the endoplasmic reticulum. It carries out the reaction isopentenyl diphosphate + dimethylallyl diphosphate = (2E)-geranyl diphosphate + diphosphate. The catalysed reaction is isopentenyl diphosphate + (2E)-geranyl diphosphate = (2E,6E)-farnesyl diphosphate + diphosphate. It catalyses the reaction isopentenyl diphosphate + (2E,6E)-farnesyl diphosphate = (2E,6E,10E)-geranylgeranyl diphosphate + diphosphate. It functions in the pathway isoprenoid biosynthesis; farnesyl diphosphate biosynthesis; farnesyl diphosphate from geranyl diphosphate and isopentenyl diphosphate: step 1/1. The protein operates within isoprenoid biosynthesis; geranyl diphosphate biosynthesis; geranyl diphosphate from dimethylallyl diphosphate and isopentenyl diphosphate: step 1/1. Its pathway is isoprenoid biosynthesis; geranylgeranyl diphosphate biosynthesis; geranylgeranyl diphosphate from farnesyl diphosphate and isopentenyl diphosphate: step 1/1. Its function is as follows. Heterodimeric geranyl(geranyl)-diphosphate (GPP) synthase large subunit. In vitro, the large subunit catalyzes mainly the trans-addition of the three molecules of IPP onto DMAPP to form geranylgeranyl pyrophosphate while the small subunit alone is inactive. Upon association of the two subunits, the product profile is not changed. The protein is Heterodimeric geranylgeranyl pyrophosphate synthase large subunit 2 (GGPPS2) of Arabidopsis thaliana (Mouse-ear cress).